Reading from the N-terminus, the 161-residue chain is uncharacterized protein (161 aa).

This is an uncharacterized protein from Encephalitozoon cuniculi (strain GB-M1) (Microsporidian parasite).